Consider the following 129-residue polypeptide: UPF0325 protein Ent638_0703 (129 aa).

Belongs to the UPF0325 family.

This chain is UPF0325 protein Ent638_0703, found in Enterobacter sp. (strain 638).